The sequence spans 518 residues: Putative BTB/POZ domain and WD-repeat protein R731 (518 aa).

Positions 22 to 92 constitute a BTB domain; sequence TDCQLHLTDS…FYGFPLEEPN (71 aa). The interval 224–246 is disordered; sequence NHEESSDDEVNDDEDTDNEDTDD. A compositionally biased stretch (acidic residues) spans 228 to 246; that stretch reads SSDDEVNDDEDTDNEDTDD. WD repeat units follow at residues 391–430 and 437–475; these read NHST…SLIK and FLKF…IIQN.

This sequence belongs to the mimivirus BTB/WD family.

The chain is Putative BTB/POZ domain and WD-repeat protein R731 from Acanthamoeba polyphaga (Amoeba).